The following is a 268-amino-acid chain: Acyl-CoA-binding domain-containing protein 4 (268 aa).

Residues 12-101 enclose the ACB domain; the sequence is CQKQFQAAVS…MKLVAQKVID (90 aa). Residues 23 to 32, 43 to 47, Lys69, and Tyr88 each bind an acyl-CoA; these read IQNLPKNGSY and YSYYK. Residues 151 to 175 are disordered; that stretch reads AVSEPPCLPKEPAPPSPESHSPRDL. A compositionally biased stretch (pro residues) spans 156–167; that stretch reads PCLPKEPAPPSP. Phosphoserine occurs at positions 166 and 171.

In terms of biological role, binds medium- and long-chain acyl-CoA esters and may function as an intracellular carrier of acyl-CoA esters. This chain is Acyl-CoA-binding domain-containing protein 4 (ACBD4), found in Homo sapiens (Human).